Consider the following 359-residue polypeptide: Probable tyrosine-protein phosphatase pir-2 (359 aa).

A Tyrosine-protein phosphatase domain is found at 16 to 191 (QPVGNVIPRT…AKDKRDKQVD (176 aa)). Residue C131 is the Phosphocysteine intermediate of the active site. Residues 184–199 (DKRDKQVDSDSDSSER) are compositionally biased toward basic and acidic residues. 3 disordered regions span residues 184-211 (DKRD…KHRE), 234-259 (SVSG…PHHW), and 274-328 (PVAN…RNRM). Positions 200–210 (QRKKKNKRKHR) are enriched in basic residues. Over residues 234 to 246 (SVSGTDYQNSPNG) the composition is skewed to polar residues. The segment covering 290 to 309 (PQEEEEFEEDFEEIEEETET) has biased composition (acidic residues). Residues 319–328 (SKRRARRNRM) show a composition bias toward basic residues.

The protein belongs to the protein-tyrosine phosphatase family. Non-receptor class CDC14 subfamily.

It catalyses the reaction O-phospho-L-tyrosyl-[protein] + H2O = L-tyrosyl-[protein] + phosphate. The chain is Probable tyrosine-protein phosphatase pir-2 from Caenorhabditis elegans.